The chain runs to 88 residues: Apolipoprotein C-I (88 aa).

A signal peptide spans 1-26 (MRLILSLPVLVVVLSMVLEGPAPAQA).

This sequence belongs to the apolipoprotein C1 family. As to expression, expressed in the liver.

The protein resides in the secreted. Functionally, inhibitor of lipoprotein binding to the low density lipoprotein (LDL) receptor, LDL receptor-related protein, and very low density lipoprotein (VLDL) receptor. Associates with high density lipoproteins (HDL) and the triacylglycerol-rich lipoproteins in the plasma and makes up about 10% of the protein of the VLDL and 2% of that of HDL. Appears to interfere directly with fatty acid uptake and is also the major plasma inhibitor of cholesteryl ester transfer protein (CETP). Binds free fatty acids and reduces their intracellular esterification. Modulates the interaction of APOE with beta-migrating VLDL and inhibits binding of beta-VLDL to the LDL receptor-related protein. The chain is Apolipoprotein C-I (APOC1) from Canis lupus familiaris (Dog).